A 248-amino-acid chain; its full sequence is Tyrosine recombinase XerD-like (248 aa).

Positions 1–72 constitute a Core-binding (CB) domain; sequence MKSYIEPFIA…TANQFLYYLY (72 aa). One can recognise a Tyr recombinase domain in the interval 85–248; the sequence is DTMKVMRTEK…PVTLEKYYKS (164 aa). Residues Lys-149 and Arg-213 contribute to the active site. The active-site O-(3'-phospho-DNA)-tyrosine intermediate is Tyr-245.

The protein belongs to the 'phage' integrase family. XerD-like subfamily.

The protein localises to the cytoplasm. Putative tyrosine recombinase. Not involved in the cutting and rejoining of the recombining DNA molecules on dif(SL) site. This Streptococcus pyogenes serotype M6 (strain ATCC BAA-946 / MGAS10394) protein is Tyrosine recombinase XerD-like.